The primary structure comprises 638 residues: Probable inactive receptor kinase At4g23740 (638 aa).

Residues 1 to 24 (MEALRIYLWSLCLSLCLIIYGANS) form the signal peptide. LRR repeat units follow at residues 94-117 (ALRVLSLRSNLISGEFPKDFVELK), 118-139 (DLAFLYLQDNNLSGPLPLDFSV), 142-165 (NLTSVNLSNNGFNGTIPSSLSRLK), 166-188 (RIQSLNLANNTLSGDIPDLSVLS), and 189-198 (SLQHIDLSNN). A helical transmembrane segment spans residues 257-277 (VFLLIVIAVSIVVITALAFVL). The 272-residue stretch at 337-608 (RASAEVLGKG…SDLVRLIENV (272 aa)) folds into the Protein kinase domain. A Phosphoserine modification is found at Ser339. ATP is bound at residue 343–351 (LGKGTFGTT). A Phosphothreonine modification is found at Thr360. Position 365 (Lys365) interacts with ATP. 2 positions are modified to phosphoserine: Ser416 and Ser419. A phosphothreonine mark is found at Thr436 and Thr509. Ser513 bears the Phosphoserine mark. Positions 612 to 638 (RTSIEPEPELKPKSENGASETSTPSEI) are disordered. Positions 613–625 (TSIEPEPELKPKS) are enriched in basic and acidic residues. Residues 627–638 (NGASETSTPSEI) show a composition bias toward polar residues.

It belongs to the protein kinase superfamily.

The protein localises to the membrane. This is Probable inactive receptor kinase At4g23740 from Arabidopsis thaliana (Mouse-ear cress).